The following is an 84-amino-acid chain: Acetylcholine receptor subunit alpha (84 aa).

Cystine bridges form between Cys7–Cys21 and Cys71–Cys72. Asn20 carries N-linked (GlcNAc...) asparagine glycosylation.

Belongs to the ligand-gated ion channel (TC 1.A.9) family. Acetylcholine receptor (TC 1.A.9.1) subfamily. Alpha-1/CHRNA1 sub-subfamily. In terms of assembly, one of the alpha chains that assemble within the acetylcholine receptor, a pentamer of two alpha chains, a beta, a delta, and a gamma (in immature muscle) or epsilon (in mature muscle) chains. The muscle heteropentamer composed of alpha-1, beta-1, delta, epsilon subunits interacts with the alpha-conotoxin ImII.

The protein localises to the postsynaptic cell membrane. The protein resides in the cell membrane. It carries out the reaction K(+)(in) = K(+)(out). It catalyses the reaction Na(+)(in) = Na(+)(out). Functionally, upon acetylcholine binding, the AChR responds by an extensive change in conformation that affects all subunits and leads to opening of an ion-conducting channel across the plasma membrane. The protein is Acetylcholine receptor subunit alpha (CHRNA1) of Felis catus (Cat).